The chain runs to 210 residues: Chloramphenicol acetyltransferase (210 aa).

The active site involves H79.

Belongs to the transferase hexapeptide repeat family.

The enzyme catalyses chloramphenicol + acetyl-CoA = chloramphenicol 3-acetate + CoA. This enzyme is an effector of chloramphenicol resistance in bacteria. The protein is Chloramphenicol acetyltransferase (cat) of Morganella morganii (Proteus morganii).